The chain runs to 326 residues: Ketol-acid reductoisomerase (NADP(+)) (326 aa).

In terms of domain architecture, KARI N-terminal Rossmann spans 1-180; sequence MDIIHDNAAD…GLTRGGVLEC (180 aa). Residues 24–27, arginine 47, and serine 51 contribute to the NADP(+) site; that span reads YGAQ. Histidine 106 is an active-site residue. Glycine 132 is an NADP(+) binding site. The region spanning 181-326 is the KARI C-terminal knotted domain; the sequence is TMAQETYEDL…AKIRSLFERN (146 aa). 4 residues coordinate Mg(2+): aspartate 189, glutamate 193, glutamate 225, and glutamate 229. Serine 250 provides a ligand contact to substrate.

It belongs to the ketol-acid reductoisomerase family. Mg(2+) is required as a cofactor.

The catalysed reaction is (2R)-2,3-dihydroxy-3-methylbutanoate + NADP(+) = (2S)-2-acetolactate + NADPH + H(+). It catalyses the reaction (2R,3R)-2,3-dihydroxy-3-methylpentanoate + NADP(+) = (S)-2-ethyl-2-hydroxy-3-oxobutanoate + NADPH + H(+). Its pathway is amino-acid biosynthesis; L-isoleucine biosynthesis; L-isoleucine from 2-oxobutanoate: step 2/4. The protein operates within amino-acid biosynthesis; L-valine biosynthesis; L-valine from pyruvate: step 2/4. Involved in the biosynthesis of branched-chain amino acids (BCAA). Catalyzes an alkyl-migration followed by a ketol-acid reduction of (S)-2-acetolactate (S2AL) to yield (R)-2,3-dihydroxy-isovalerate. In the isomerase reaction, S2AL is rearranged via a Mg-dependent methyl migration to produce 3-hydroxy-3-methyl-2-ketobutyrate (HMKB). In the reductase reaction, this 2-ketoacid undergoes a metal-dependent reduction by NADPH to yield (R)-2,3-dihydroxy-isovalerate. This Akkermansia muciniphila (strain ATCC BAA-835 / DSM 22959 / JCM 33894 / BCRC 81048 / CCUG 64013 / CIP 107961 / Muc) protein is Ketol-acid reductoisomerase (NADP(+)).